The following is a 266-amino-acid chain: Heat-inducible transcription repressor HrcA (266 aa).

This sequence belongs to the HrcA family.

Functionally, negative regulator of class I heat shock genes (grpE-dnaK-dnaJ and groELS operons). Prevents heat-shock induction of these operons. In Helicobacter pylori (strain J99 / ATCC 700824) (Campylobacter pylori J99), this protein is Heat-inducible transcription repressor HrcA.